Here is a 1330-residue protein sequence, read N- to C-terminus: G2/mitotic-specific cyclin-B3 (1330 aa).

Residues Met1 to Leu50 form a disordered region. Polar residues predominate over residues Ser20–Gln30. Positions Arg54 to Asn62 match the D-box motif. The segment at Val1002 to Ile1059 is disordered. The span at Ser1026–Ser1048 shows a compositional bias: low complexity.

Belongs to the cyclin family. Cyclin AB subfamily. As to quaternary structure, interacts with CDK2 kinase. Ubiquitinated. Ubiquitination leads to its degradation during anaphase entry, after degradation of CCNB1.

The protein resides in the nucleus. Functionally, cyclins are positive regulatory subunits of the cyclin-dependent kinases (CDKs), and thereby play an essential role in the control of the cell cycle, notably via their destruction during cell division. Its tissue specificity suggest that it may be required during early meiotic prophase I. This is G2/mitotic-specific cyclin-B3 (CCNB3) from Canis lupus familiaris (Dog).